The chain runs to 583 residues: 1-deoxy-D-xylulose-5-phosphate synthase (583 aa).

Residues histidine 74 and 115-117 (GHS) each bind thiamine diphosphate. Residue aspartate 146 coordinates Mg(2+). Residues 147 to 148 (GG), asparagine 175, phenylalanine 244, and glutamate 327 each bind thiamine diphosphate. Asparagine 175 contributes to the Mg(2+) binding site.

This sequence belongs to the transketolase family. DXPS subfamily. In terms of assembly, homodimer. The cofactor is Mg(2+). It depends on thiamine diphosphate as a cofactor.

It carries out the reaction D-glyceraldehyde 3-phosphate + pyruvate + H(+) = 1-deoxy-D-xylulose 5-phosphate + CO2. It functions in the pathway metabolic intermediate biosynthesis; 1-deoxy-D-xylulose 5-phosphate biosynthesis; 1-deoxy-D-xylulose 5-phosphate from D-glyceraldehyde 3-phosphate and pyruvate: step 1/1. In terms of biological role, catalyzes the acyloin condensation reaction between C atoms 2 and 3 of pyruvate and glyceraldehyde 3-phosphate to yield 1-deoxy-D-xylulose-5-phosphate (DXP). This chain is 1-deoxy-D-xylulose-5-phosphate synthase, found in Myxococcus xanthus (strain DK1622).